A 441-amino-acid polypeptide reads, in one-letter code: Chromosomal replication initiator protein DnaA (441 aa).

The tract at residues 1-71 (MDIRWEEILE…AVYQVVGDRF (71 aa)) is domain I, interacts with DnaA modulators. A domain II region spans residues 71 to 99 (FKVSILTESETSSHVLKEVIQSKFDDSDS). Residues 100–318 (DLNPEYIFSN…GIVNDLVMYK (219 aa)) are domain III, AAA+ region. Residues Gly-143, Gly-145, Lys-146, and Thr-147 each contribute to the ATP site. The interval 319 to 441 (KAYEYFLLTE…HTIKHKISFQ (123 aa)) is domain IV, binds dsDNA.

This sequence belongs to the DnaA family. Oligomerizes as a right-handed, spiral filament on DNA at oriC.

Its subcellular location is the cytoplasm. Functionally, plays an essential role in the initiation and regulation of chromosomal replication. ATP-DnaA binds to the origin of replication (oriC) to initiate formation of the DNA replication initiation complex once per cell cycle. Binds the DnaA box (a 9 base pair repeat at the origin) and separates the double-stranded (ds)DNA. Forms a right-handed helical filament on oriC DNA; dsDNA binds to the exterior of the filament while single-stranded (ss)DNA is stabiized in the filament's interior. The ATP-DnaA-oriC complex binds and stabilizes one strand of the AT-rich DNA unwinding element (DUE), permitting loading of DNA polymerase. After initiation quickly degrades to an ADP-DnaA complex that is not apt for DNA replication. Binds acidic phospholipids. The polypeptide is Chromosomal replication initiator protein DnaA (Leptospira biflexa serovar Patoc (strain Patoc 1 / Ames)).